An 89-amino-acid polypeptide reads, in one-letter code: Small ribosomal subunit protein uS15 (89 aa).

This sequence belongs to the universal ribosomal protein uS15 family. Part of the 30S ribosomal subunit. Forms a bridge to the 50S subunit in the 70S ribosome, contacting the 23S rRNA.

Its function is as follows. One of the primary rRNA binding proteins, it binds directly to 16S rRNA where it helps nucleate assembly of the platform of the 30S subunit by binding and bridging several RNA helices of the 16S rRNA. In terms of biological role, forms an intersubunit bridge (bridge B4) with the 23S rRNA of the 50S subunit in the ribosome. The sequence is that of Small ribosomal subunit protein uS15 from Colwellia psychrerythraea (strain 34H / ATCC BAA-681) (Vibrio psychroerythus).